A 185-amino-acid chain; its full sequence is Probable calcium-binding protein CML10 (185 aa).

The disordered stretch occupies residues Met-1 to Met-41. 4 consecutive EF-hand domains span residues Thr-36–Ala-71, Ala-72–Asp-107, Ala-110–Lys-145, and Ala-146–Phe-181. Residues Asp-49, Asn-51, Asp-53, Arg-55, Glu-60, Asp-85, Asp-87, Asp-89, Glu-96, Asp-123, Asp-125, Asn-127, Thr-129, Glu-134, Asp-159, Asn-161, Asp-163, and Glu-170 each coordinate Ca(2+).

Potential calcium sensor. In Oryza sativa subsp. japonica (Rice), this protein is Probable calcium-binding protein CML10 (CML10).